Here is an 864-residue protein sequence, read N- to C-terminus: MKRIRHITFLAAFICIIFVIYAIYHSVGQADSSVFAGGEGTKENPYLIETAAHLDNVRNYLGEGYHFQLVQDIDLTAYLDPGGPGWEPIGDNANRFEGHINGNGYRITGFFINRTDGNYIGLFGVIGENGLVRNLSLTGDYITVEGAPALVGALTGNNYGVIDNVSVEIGDGITLSPQSAYVGGLVGTNHGEIWNSNVNSDVNGGNEVGGLVGRNASNNTTRIGIIHNSHATGNVSGQDMVGGLVGNASGKIRYSYATGNVDGLESVGGLIGTSVRIEVDASYATSDVTGESSVGGLIGDVRIDNSRSSVRNSFAIGKVTLPSTGGDVGGLIGTNFSGDVENSYAAGQIEASGASNVGGLIGRQAGGFSSGTVENSFYDEDTTGQSDTGKGTPMSTADMKDRSTFEDAGWDFDWIWGIESDDYPHHDLYFTLTYQADDLDHGDVPSDEIHSRGSVVLVADQGNMSRTGYSFSGWNTALDGSGETYDPYSPVFNSFVMGANDKTLYAQWSINKYDVHFDGNDYDSGQAPLTETILYESEVNVPDQHTLVKDGYTFTGWNTERDGSGDFYEPGDTFRMGTEPVTLYAQWEINVYSVSFESNGGSQVSEVEAEYGTAITEPLPPEKEGHLFKGWYQDELLTEAWDFETSKVSENMILYAKWEINEYTVSFESNGGSQVSEVEAEYGSSITEPVPPEKEGHSFKGWYQDEFLTEAWDFKTDTVSGDMTLYAKWEINVYSVSFESNGGSQVSEVDTEFASLIEEPTPPEKEGHSFKGWYQDKLLTEAWEFETDTVIGDMTLYAKWEINVYTVSFATNGGSKVSEVDAEFASLIAEPTPPEKEGHSFKEWYQDELLTEAWEFERTRLTKI.

The helical transmembrane segment at 7 to 27 threads the bilayer; it reads ITFLAAFICIIFVIYAIYHSV. A disordered region spans residues 372–399; sequence TVENSFYDEDTTGQSDTGKGTPMSTADM. Residues 383–395 are compositionally biased toward polar residues; that stretch reads TGQSDTGKGTPMS.

It localises to the cell membrane. This is Putative Gly-rich membrane protein Bcell_0380 from Evansella cellulosilytica (strain ATCC 21833 / DSM 2522 / FERM P-1141 / JCM 9156 / N-4) (Bacillus cellulosilyticus).